The following is a 550-amino-acid chain: ATP-dependent RNA helicase MSS116, mitochondrial (550 aa).

Positions 1–11 (MPPPPKRKWPN) are enriched in basic residues. Residues 1-41 (MPPPPKRKWPNRPRGGGGANGSASGTPTTPRSTVAQQPKRP) constitute a mitochondrion transit peptide. A disordered region spans residues 1–51 (MPPPPKRKWPNRPRGGGGANGSASGTPTTPRSTVAQQPKRPKVEDAAPAAE). Positions 71–99 (FSELSSVLDKSLLDGLDKMGFEFMSPVQQ) match the Q motif motif. The Helicase ATP-binding domain occupies 103–285 (TELPSLSSDC…KIVLFPGFTH (183 aa)). 116–123 (AKTGTGKT) contacts ATP. The DEAD box signature appears at 230–233 (DEAD). Residues 316-472 (ALSALIQEEH…KVPEQEAAIT (157 aa)) form the Helicase C-terminal domain.

This sequence belongs to the DEAD box helicase family. DDX18/HAS1 subfamily.

It localises to the mitochondrion matrix. It catalyses the reaction ATP + H2O = ADP + phosphate + H(+). In terms of biological role, ATP-dependent RNA helicase required for mitochondrial splicing of group I and II introns. Also required for efficient mitochondrial translation. This Phaeosphaeria nodorum (strain SN15 / ATCC MYA-4574 / FGSC 10173) (Glume blotch fungus) protein is ATP-dependent RNA helicase MSS116, mitochondrial (MSS116).